The chain runs to 247 residues: MYTLVLLRHGQSLWNLENKFTGWIDVDLSDQGKEEAKNAGKAMLEAGITPKAAFTSYLRRAINTLNIALDTMNLHYIDVFKSWRLNERHYGALQGLNKKEMVKIHGEEQVNIWRRNYDVPPPPLPKDDPNHPCNDPRYKHIRCQDLPSSESLKDTLERTLPYFQDFIAPTLFQRGCVLVAAHGNSLRAIVKYIEDLSKDEIVKLNIPTGIPLVYVVDDNLNIKSKRYLADEETLKKAIESVANQTKA.

Residues 8-15 (RHGQSLWN), 21-22 (TG), Arg-60, 87-90 (ERHY), Lys-98, 114-115 (RR), and 183-184 (GN) contribute to the substrate site. His-9 serves as the catalytic Tele-phosphohistidine intermediate. The active-site Proton donor/acceptor is the Glu-87.

Belongs to the phosphoglycerate mutase family. BPG-dependent PGAM subfamily.

The catalysed reaction is (2R)-2-phosphoglycerate = (2R)-3-phosphoglycerate. It functions in the pathway carbohydrate degradation; glycolysis; pyruvate from D-glyceraldehyde 3-phosphate: step 3/5. In terms of biological role, catalyzes the interconversion of 2-phosphoglycerate and 3-phosphoglycerate. The sequence is that of 2,3-bisphosphoglycerate-dependent phosphoglycerate mutase from Hydrogenobaculum sp. (strain Y04AAS1).